Reading from the N-terminus, the 92-residue chain is Small ribosomal subunit protein bS20 (92 aa).

A compositionally biased stretch (basic and acidic residues) spans 1–21 (MPLHKSAEKRLRQAARRNERN). Disordered stretches follow at residues 1–26 (MPLH…ARKK) and 73–92 (ASRK…PTAS). Residues 82-92 (KALNNYTPTAS) are compositionally biased toward polar residues.

Belongs to the bacterial ribosomal protein bS20 family.

Its function is as follows. Binds directly to 16S ribosomal RNA. The chain is Small ribosomal subunit protein bS20 from Chlorobaculum tepidum (strain ATCC 49652 / DSM 12025 / NBRC 103806 / TLS) (Chlorobium tepidum).